We begin with the raw amino-acid sequence, 50 residues long: Fungus-induced protein 3 (50 aa).

The protein is Fungus-induced protein 3 (fip-3) of Caenorhabditis elegans.